Consider the following 611-residue polypeptide: Dihydroxy-acid dehydratase (611 aa).

Asp81 contributes to the Mg(2+) binding site. Cys122 contacts [2Fe-2S] cluster. Mg(2+) contacts are provided by Asp123 and Lys124. Position 124 is an N6-carboxylysine (Lys124). A [2Fe-2S] cluster-binding site is contributed by Cys195. Residue Glu491 coordinates Mg(2+). Catalysis depends on Ser517, which acts as the Proton acceptor.

This sequence belongs to the IlvD/Edd family. In terms of assembly, homodimer. [2Fe-2S] cluster is required as a cofactor. Requires Mg(2+) as cofactor.

It carries out the reaction (2R)-2,3-dihydroxy-3-methylbutanoate = 3-methyl-2-oxobutanoate + H2O. The enzyme catalyses (2R,3R)-2,3-dihydroxy-3-methylpentanoate = (S)-3-methyl-2-oxopentanoate + H2O. It participates in amino-acid biosynthesis; L-isoleucine biosynthesis; L-isoleucine from 2-oxobutanoate: step 3/4. The protein operates within amino-acid biosynthesis; L-valine biosynthesis; L-valine from pyruvate: step 3/4. In terms of biological role, functions in the biosynthesis of branched-chain amino acids. Catalyzes the dehydration of (2R,3R)-2,3-dihydroxy-3-methylpentanoate (2,3-dihydroxy-3-methylvalerate) into 2-oxo-3-methylpentanoate (2-oxo-3-methylvalerate) and of (2R)-2,3-dihydroxy-3-methylbutanoate (2,3-dihydroxyisovalerate) into 2-oxo-3-methylbutanoate (2-oxoisovalerate), the penultimate precursor to L-isoleucine and L-valine, respectively. In Brucella abortus (strain S19), this protein is Dihydroxy-acid dehydratase.